The sequence spans 347 residues: FK506-binding protein-like (347 aa).

The disordered stretch occupies residues Met1 to Gln36. Thr3 carries the phosphothreonine modification. TPR repeat units follow at residues Ala208–Leu241, Thr250–His283, and Leu284–Asn317.

Forms a ternary complex with CDKN1A/p21 and HSP90AB1/Hsp90.

Functionally, may be involved in response to X-ray. Regulates p21 protein stability by binding to Hsp90 and p21. In Rattus norvegicus (Rat), this protein is FK506-binding protein-like (Fkbpl).